Here is a 246-residue protein sequence, read N- to C-terminus: 2-aminoethylphosphonate cytidylyltransferase (246 aa).

Positions 19, 20, 34, 97, 114, and 115 each coordinate CMP-(2-aminoethyl)phosphonate. D116 and D145 together coordinate Mg(2+). D145, K161, and D202 together coordinate CMP-(2-aminoethyl)phosphonate. Mg(2+)-binding residues include E226 and D228.

It belongs to the LicC/PntC cytidylyltransferase family. In terms of assembly, monomer. It depends on Mg(2+) as a cofactor.

It catalyses the reaction (2-aminoethyl)phosphonate + CTP = CMP-(2-aminoethyl)phosphonate + diphosphate. Its pathway is phosphorus metabolism; phosphonate biosynthesis. Cytidylyltransferase involved in the biosynthesis of cell-surface phosphonates. Catalyzes the activation of 2-aminoethylphosphonate (AEP) to CMP-2-aminoethylphosphonate (CMP-AEP). Can also use phosphocholine, with much lower efficiency. Exhibits strong activity towards CTP, limited activity towards ATP and no activity with GTP. The protein is 2-aminoethylphosphonate cytidylyltransferase of Lancefieldella rimae (strain ATCC 49626 / DSM 7090 / CCUG 31168 / NBRC 15546 / VPI D140H-11A) (Atopobium rimae).